Here is an 893-residue protein sequence, read N- to C-terminus: UPF0182 protein CLI_0022 (893 aa).

A run of 7 helical transmembrane segments spans residues 9–29 (IPLFIIILFIAFFNKIINFII), 49–69 (AIIILMIPIFIIFFISIWMYY), 94–114 (LFFIFNFIVSIFLAYIFSSSY), 154–174 (VIISLLLFLVITTFIAYFILE), 202–222 (LAIVSGLIILFISFGHLIKIW), 246–266 (FYKIIVVITLISSIVTLLSIV), and 273–293 (VSICIGITIFLIVSQNIASFL).

It belongs to the UPF0182 family.

The protein resides in the cell membrane. The sequence is that of UPF0182 protein CLI_0022 from Clostridium botulinum (strain Langeland / NCTC 10281 / Type F).